Consider the following 777-residue polypeptide: CRISPR system single-strand-specific deoxyribonuclease Cas10/Csm1 (subtype III-A) (777 aa).

One can recognise an HD domain in the interval 1–106 (MEIDELTALG…VYEADNLASG (106 aa)). A GGDEF domain is found at 513-660 (RRLGVMKGDV…GRNRVFVVGR (148 aa)).

This sequence belongs to the CRISPR-associated Cas10/Csm1 family. In terms of assembly, probably part of the Csm effector complex, that includes Cas10, Csm2, Csm3, Csm4, Csm5 and mature crRNA. Will form a homodimer in solution, interacts with Csm4, which is a tighter, better association than the homodimeric Cas10 and uses the same interface for interaction. It depends on a divalent metal cation as a cofactor.

SsDNase activity is inhibited by EDTA. In terms of biological role, CRISPR (clustered regularly interspaced short palindromic repeat) is an adaptive immune system that provides protection against mobile genetic elements (viruses, transposable elements and conjugative plasmids). CRISPR clusters contain spacers, sequences complementary to antecedent mobile elements, and target invading nucleic acids. CRISPR clusters are transcribed and processed into CRISPR RNA (crRNA). The type III-A Csm effector complex binds crRNA and acts as a crRNA-guided RNase, DNase and cyclic oligoadenylate synthase; binding of target RNA cognate to the crRNA is required for all activities. Its function is as follows. A single-strand deoxyribonuclease (ssDNase) which digests linear and circular ssDNA; has 5'-3' and 3'-5' exonuclease activity as well as a less efficient endonuclease activity. Has a minimal size requirement; 100 nucleotide ssDNA (nt) is more efficiently digested than 50 or 25 nt ssDNA, while 14 nt ssDNA is not cleaved at all. It has no activity on dsDNA or ssRNA. Functionally, ssDNase activity is stimulated in the ternary Csm effector complex; binding of cognate target RNA activates the ssDNase, as the target RNA is degraded ssDNA activity decreases. When associated with the ternary Csm effector complex (the crRNA, Cas proteins and a cognate target ssRNA) synthesizes cyclic oligoadenylates (cOA) from ATP. cOAs are second messengers that stimulate the ssRNase activity of Csm6, inducing an antiviral state important for defense against invading nucleic acids. The protein is CRISPR system single-strand-specific deoxyribonuclease Cas10/Csm1 (subtype III-A) of Thermococcus onnurineus (strain NA1).